The sequence spans 64 residues: Copper-metallothionein (64 aa).

S1 is modified (N-acetylserine). Positions 7, 11, 16, 18, 22, 24, 28, 30, 33, 36, 38, 43, 45, 49, 55, 57, 61, and 63 each coordinate Cu(+).

The protein belongs to the metallothionein superfamily. Type 2 family.

The metallothioneins are involved in the cellular sequestration of toxic metal ions and regulation of essential trace elements. This isoform binds exclusively copper. In Helix pomatia (Roman snail), this protein is Copper-metallothionein.